Reading from the N-terminus, the 535-residue chain is Tetrathionate hydrolase (535 aa).

The signal sequence occupies residues Met1–Lys39. Asn50 carries an N-linked (GlcNAc...) asparagine glycan.

It belongs to the tetrathionate hydrolase family. Monomer and homodimer; in equilibrium.

It is found in the cell surface. It catalyses the reaction tetrathionate + H2O = sulfur + thiosulfate + sulfate + H(+). Catalyzes the hydrolysis of tetrathionate to generate elemental sulfur, thiosulfate and sulfate. In Acidianus ambivalens (Desulfurolobus ambivalens), this protein is Tetrathionate hydrolase.